Consider the following 390-residue polypeptide: Cell adhesion molecule 4 (390 aa).

Positions 1 to 27 (MAPALTALNRCFVLGILLLVTAGTAFS) are cleaved as a signal peptide. Residues 28–122 (QEVQAENVTV…DTHHQIATLT (95 aa)) form the Ig-like V-type domain. The Extracellular portion of the chain corresponds to 28–326 (QEVQAENVTV…IEAQTQVPYA (299 aa)). N-linked (GlcNAc...) asparagine glycans are attached at residues asparagine 34 and asparagine 70. 3 disulfides stabilise this stretch: cysteine 47–cysteine 107, cysteine 148–cysteine 202, and cysteine 247–cysteine 293. Ig-like C2-type domains lie at 127–219 (PDNP…TQYE) and 226–309 (PTAS…YVLV). N-linked (GlcNAc...) asparagine glycans are attached at residues asparagine 264 and asparagine 288. A helical membrane pass occupies residues 327 to 347 (VIGGILALLVFLVICILIVMV). Residues 348-390 (WCSVRQKGSYLTHEASGLDEHGEAREAFLNGGENHKRKEEFFI) lie on the Cytoplasmic side of the membrane.

It belongs to the nectin family.

It is found in the membrane. Functionally, involved in the cell-cell adhesion. This is Cell adhesion molecule 4 (cadm4) from Xenopus laevis (African clawed frog).